The sequence spans 1946 residues: Integrin beta-like protein E (1946 aa).

The signal sequence occupies residues 1 to 22 (MNNLFKFLFVLLAIFCPPISDL). Residues 23–1875 (VVSHGVPQQH…ATTQTTNNKT (1853 aa)) are Extracellular-facing. 3 N-linked (GlcNAc...) asparagine glycosylation sites follow: N107, N134, and N203. An EGF-like domain is found at 423 to 460 (YGQNCDPTPPCDKGIPNEGILGDGKCMCINGYSGDKCD). 2 disulfides stabilise this stretch: C433–C448 and C450–C459. A VWFA domain is found at 514–699 (DVFVLVDVNV…AGLKSVLSNV (186 aa)). Residues N705, N860, N1043, N1113, N1177, N1374, N1401, N1513, N1611, N1620, N1662, N1671, N1737, N1743, N1762, N1812, N1852, and N1873 are each glycosylated (N-linked (GlcNAc...) asparagine). A helical transmembrane segment spans residues 1876-1896 (VLTGAIAGAAAGTALIAAAAW). The Cytoplasmic segment spans residues 1897–1946 (KLLRKAAPPTDTFFSEAAFLGDGVNANPLYEQSASAAENPLYQSASDNTD).

The protein belongs to the SIB family. As to quaternary structure, interacts with talA/talin.

It is found in the membrane. In terms of biological role, implicated in cellular adhesion. The protein is Integrin beta-like protein E (sibE) of Dictyostelium discoideum (Social amoeba).